A 132-amino-acid polypeptide reads, in one-letter code: Small ribosomal subunit protein uS8c (132 aa).

It belongs to the universal ribosomal protein uS8 family. In terms of assembly, part of the 30S ribosomal subunit.

It is found in the plastid. Its subcellular location is the chloroplast. Its function is as follows. One of the primary rRNA binding proteins, it binds directly to 16S rRNA central domain where it helps coordinate assembly of the platform of the 30S subunit. The protein is Small ribosomal subunit protein uS8c (rps8) of Drimys granadensis.